The primary structure comprises 185 residues: Ribose 1,5-bisphosphate phosphokinase PhnN (185 aa).

10–17 (GPSGSGKD) is an ATP binding site.

Belongs to the ribose 1,5-bisphosphokinase family.

It catalyses the reaction alpha-D-ribose 1,5-bisphosphate + ATP = 5-phospho-alpha-D-ribose 1-diphosphate + ADP. The protein operates within metabolic intermediate biosynthesis; 5-phospho-alpha-D-ribose 1-diphosphate biosynthesis; 5-phospho-alpha-D-ribose 1-diphosphate from D-ribose 5-phosphate (route II): step 3/3. In terms of biological role, catalyzes the phosphorylation of ribose 1,5-bisphosphate to 5-phospho-D-ribosyl alpha-1-diphosphate (PRPP). The polypeptide is Ribose 1,5-bisphosphate phosphokinase PhnN (Pseudomonas paraeruginosa (strain DSM 24068 / PA7) (Pseudomonas aeruginosa (strain PA7))).